An 869-amino-acid chain; its full sequence is Rho GTPase-activating protein 27 (869 aa).

The SH3 domain maps to 6 to 69 (EGDVYVLVEH…PAQYVRELPA (64 aa)). Ala-28 is subject to Phosphotyrosine. A disordered region spans residues 104 to 134 (GADGSSAEPRGRASSLCGPARQRTGGQRNSL). 3 positions are modified to phosphoserine: Ser-155, Ser-215, and Ser-249. 2 disordered regions span residues 208-300 (RCPP…SGES) and 331-401 (ETEE…GWSC). Over residues 209-220 (CPPRAESPKQVD) the composition is skewed to basic and acidic residues. Residues 235-250 (RATSPRSAAAPPRLSP) show a composition bias toward low complexity. The region spanning 246 to 280 (PRLSPVWETHTDTGTGRPYYYNPDTGVTTWESPFE) is the WW 1 domain. The segment covering 283–294 (EGTTSPATSRAS) has biased composition (polar residues). In terms of domain architecture, WW 2 spans 299–333 (ESLETEWGQYWDEESRRVFFYNPLTGETAWEDETE). The segment covering 345–356 (MQPSLSPRSPGQ) has biased composition (polar residues). At Ser-350 the chain carries Phosphoserine. The region spanning 414 to 447 (QFTQEQWVRLEDQHGKPYFYNPEDSSVQWELPQV) is the WW 3 domain. Disordered regions lie at residues 449–477 (IPAPRSVRKSSQDSDTPAQASPPEEKIKT) and 623–642 (EEDVRQNAASPSLSPGGLES). Residues Ser-459 and Ser-462 each carry the phosphoserine modification. A Phosphothreonine modification is found at Thr-464. Residue Ser-469 is modified to Phosphoserine. Positions 477–593 (TLDKAGVLHR…WHKAIAEGIS (117 aa)) constitute a PH domain. Phosphoserine is present on residues Ser-632 and Ser-636. The region spanning 677–866 (CALAQLCERE…LILHQCADIF (190 aa)) is the Rho-GAP domain.

As to quaternary structure, interacts with SH3KBP1/CIN85. As to expression, widely expressed. Highly expressed in kidney, lung, small intestine and thymus.

It localises to the cytoplasm. The protein localises to the membrane. In terms of biological role, rho GTPase-activating protein which may be involved in clathrin-mediated endocytosis. GTPase activators for the Rho-type GTPases act by converting them to an inactive GDP-bound state. Has activity toward CDC42 and RAC1. The chain is Rho GTPase-activating protein 27 (Arhgap27) from Mus musculus (Mouse).